A 991-amino-acid polypeptide reads, in one-letter code: Glutamate receptor 1 (991 aa).

The first 27 residues, 1–27, serve as a signal peptide directing secretion; sequence MHSRLKFLAYLHFICASSIFWPEFSSA. The Extracellular portion of the chain corresponds to 28–611; sequence QQQQQTVSLT…VFSFLNPLSQ (584 aa). N-linked (GlcNAc...) asparagine glycans are attached at residues Asn67, Asn195, Asn208, and Asn281. Disordered regions lie at residues 300–321 and 354–379; these read DSRK…GPNS and FRSN…NESS. The span at 308–318 shows a compositional bias: polar residues; the sequence is SGQSQSQNAGG. The span at 365–379 shows a compositional bias: low complexity; sequence GGSSSSSATGTNESS. Residues Asn376, Asn385, Asn426, Asn437, and Asn477 are each glycosylated (N-linked (GlcNAc...) asparagine). Residues 612–632 form a helical membrane-spanning segment; the sequence is EIWISVILSYVGVSFVLYFVT. At 633 to 710 the chain is on the cytoplasmic side; sequence RFPPYEWRIV…PSIAGRIAAA (78 aa). Residues 711–731 traverse the membrane as a helical segment; sequence VWWFFTIILISSYTANLAAFL. At 732–895 the chain is on the extracellular side; it reads TVERMVAPIK…STPNELSLSN (164 aa). The helical transmembrane segment at 896–916 threads the bilayer; that stretch reads VAGIYYILIGGLLLAVIVAIM. The Cytoplasmic segment spans residues 917-991; it reads EFFCRNKTPQ…ASNVRYQYSM (75 aa).

The protein belongs to the glutamate-gated ion channel (TC 1.A.10.1) family. As to quaternary structure, homooligomer. Central nervous system.

The protein localises to the cell membrane. It localises to the postsynaptic cell membrane. Its function is as follows. Receptor for glutamate. L-glutamate acts as an excitatory neurotransmitter at many synapses in the central nervous system. The postsynaptic actions of Glu are mediated by a variety of receptors that are named according to their selective agonists. Forms ligand-gated ion channels which are activated by kainate. The chain is Glutamate receptor 1 (GluRIA) from Drosophila melanogaster (Fruit fly).